A 496-amino-acid chain; its full sequence is Probable malate:quinone oxidoreductase (496 aa).

Belongs to the MQO family. Requires FAD as cofactor.

It catalyses the reaction (S)-malate + a quinone = a quinol + oxaloacetate. It functions in the pathway carbohydrate metabolism; tricarboxylic acid cycle; oxaloacetate from (S)-malate (quinone route): step 1/1. This is Probable malate:quinone oxidoreductase from Prochlorococcus marinus (strain MIT 9313).